Consider the following 78-residue polypeptide: uncharacterized protein (78 aa).

Functionally, this protein may be involved in virus assembly. Essential for virus function. This is an uncharacterized protein from Sulfolobus spindle-shape virus 1 (SSV1).